The primary structure comprises 967 residues: Kinesin-like protein KIF28P (967 aa).

The 349-residue stretch at 7–355 folds into the Kinesin motor domain; the sequence is DSVKAVRVRP…LRYAERERKI (349 aa). 111–118 contacts ATP; sequence GQTGSGKS. Residues 410–472 enclose the FHA domain; the sequence is APCPRPALSP…LQHLDRLILG (63 aa). Residues 822–851 are a coiled coil; that stretch reads NQIPELYLKLLKLEQETEPLRNINRALREE.

Belongs to the TRAFAC class myosin-kinesin ATPase superfamily. Kinesin family.

The protein resides in the mitochondrion membrane. Its function is as follows. Microtubule-dependent motor protein required for mitochondrion morphology and transport of mitochondria in neuronal cells. This chain is Kinesin-like protein KIF28P (KIF28P), found in Homo sapiens (Human).